Reading from the N-terminus, the 405-residue chain is 2,3-diketo-5-methylthiopentyl-1-phosphate enolase (405 aa).

Lysine 91 acts as the Proton acceptor in catalysis. Substrate-binding positions include lysine 140, 166–169, histidine 257, glycine 329, and 351–352; these read KDDE and GG. Mg(2+) contacts are provided by lysine 166, aspartate 168, and glutamate 169. Lysine 166 bears the N6-carboxylysine mark.

This sequence belongs to the RuBisCO large chain family. Type IV subfamily. In terms of assembly, homodimer. The cofactor is Mg(2+).

The catalysed reaction is 5-methylsulfanyl-2,3-dioxopentyl phosphate = 2-hydroxy-5-methylsulfanyl-3-oxopent-1-enyl phosphate. It participates in amino-acid biosynthesis; L-methionine biosynthesis via salvage pathway; L-methionine from S-methyl-5-thio-alpha-D-ribose 1-phosphate: step 3/6. Its function is as follows. Catalyzes the enolization of 2,3-diketo-5-methylthiopentyl-1-phosphate (DK-MTP-1-P) into 2-hydroxy-3-keto-5-methylthiopentenyl-1-phosphate (HK-MTPenyl-1-P). The sequence is that of 2,3-diketo-5-methylthiopentyl-1-phosphate enolase from Bacillus licheniformis (strain ATCC 14580 / DSM 13 / JCM 2505 / CCUG 7422 / NBRC 12200 / NCIMB 9375 / NCTC 10341 / NRRL NRS-1264 / Gibson 46).